The chain runs to 265 residues: GTP cyclohydrolase 1 type 2 homolog (265 aa).

The a divalent metal cation site is built by His-65, Asp-103, His-225, and Glu-228.

This sequence belongs to the GTP cyclohydrolase I type 2/NIF3 family. As to quaternary structure, homohexamer.

This Streptococcus pneumoniae serotype 4 (strain ATCC BAA-334 / TIGR4) protein is GTP cyclohydrolase 1 type 2 homolog.